A 255-amino-acid chain; its full sequence is Coiled-coil domain-containing 92B (255 aa).

Residues 28-90 (LRDLHLEILR…AAANAELRRE (63 aa)) are a coiled coil. The disordered stretch occupies residues 149 to 255 (QRLQAPRPGP…SQPSAPGDPE (107 aa)). Residues 166-177 (PRRRALRARRPP) are compositionally biased toward basic residues. Positions 242–255 (QPAPSQPSAPGDPE) are enriched in pro residues.

This chain is Coiled-coil domain-containing 92B, found in Homo sapiens (Human).